A 386-amino-acid chain; its full sequence is DNA-directed RNA polymerase subunit Rpo1C (386 aa).

The protein belongs to the RNA polymerase beta' chain family. Part of the RNA polymerase complex.

Its subcellular location is the cytoplasm. The enzyme catalyses RNA(n) + a ribonucleoside 5'-triphosphate = RNA(n+1) + diphosphate. DNA-dependent RNA polymerase (RNAP) catalyzes the transcription of DNA into RNA using the four ribonucleoside triphosphates as substrates. Forms part of the jaw domain. This Methanococcus maripaludis (strain C7 / ATCC BAA-1331) protein is DNA-directed RNA polymerase subunit Rpo1C.